A 430-amino-acid chain; its full sequence is C4-dicarboxylate transport protein (430 aa).

9 helical membrane passes run 8–28 (SLYF…HFYP), 44–64 (LIKM…IAGM), 76–96 (IALL…LVIV), 144–164 (AFAS…GFAL), 184–204 (VIFG…FGAM), 222–242 (LIIC…GSIA), 289–309 (VVGL…SIYL), 326–346 (VIHQ…AAGV), and 352–372 (IVLA…LALI).

It belongs to the dicarboxylate/amino acid:cation symporter (DAACS) (TC 2.A.23) family.

The protein resides in the cell inner membrane. In terms of biological role, responsible for the transport of dicarboxylates such as succinate, fumarate, and malate from the periplasm across the membrane. In Yersinia enterocolitica serotype O:8 / biotype 1B (strain NCTC 13174 / 8081), this protein is C4-dicarboxylate transport protein.